The following is a 111-amino-acid chain: Large ribosomal subunit protein uL24 (111 aa).

It belongs to the universal ribosomal protein uL24 family. As to quaternary structure, part of the 50S ribosomal subunit.

Functionally, one of two assembly initiator proteins, it binds directly to the 5'-end of the 23S rRNA, where it nucleates assembly of the 50S subunit. In terms of biological role, one of the proteins that surrounds the polypeptide exit tunnel on the outside of the subunit. This Cytophaga hutchinsonii (strain ATCC 33406 / DSM 1761 / CIP 103989 / NBRC 15051 / NCIMB 9469 / D465) protein is Large ribosomal subunit protein uL24.